A 120-amino-acid polypeptide reads, in one-letter code: Large ribosomal subunit protein uL18 (120 aa).

The protein belongs to the universal ribosomal protein uL18 family. Part of the 50S ribosomal subunit; part of the 5S rRNA/L5/L18/L25 subcomplex. Contacts the 5S and 23S rRNAs.

In terms of biological role, this is one of the proteins that bind and probably mediate the attachment of the 5S RNA into the large ribosomal subunit, where it forms part of the central protuberance. This Macrococcus caseolyticus (strain JCSC5402) (Macrococcoides caseolyticum) protein is Large ribosomal subunit protein uL18.